Here is a 380-residue protein sequence, read N- to C-terminus: Coiled-coil domain-containing protein 74B (380 aa).

Disordered stretches follow at residues 1–51 (MSGA…KRNL), 89–108 (LIMN…HLSR), and 128–202 (GGPS…DVPQ). Positions 34-44 (LRPQSPQLRQS) are enriched in polar residues. Residues 47-93 (QKRNLDLEKSLQFLQQQHSEMLAKLHEEIEHLKRENKDLRYKLIMNQ) adopt a coiled-coil conformation. Residues 141-151 (RTHRPGGKHGR) are compositionally biased toward basic residues. Residues 165-182 (DSLSTSSFQSVKSISNSG) are compositionally biased toward polar residues.

The polypeptide is Coiled-coil domain-containing protein 74B (CCDC74B) (Homo sapiens (Human)).